The sequence spans 205 residues: Ribonuclease HII (205 aa).

Positions 14 to 201 (EIIAGVDEAG…KGNINHSAIL (188 aa)) constitute an RNase H type-2 domain. The a divalent metal cation site is built by aspartate 20, glutamate 21, and aspartate 111.

It belongs to the RNase HII family. It depends on Mn(2+) as a cofactor. Requires Mg(2+) as cofactor.

It localises to the cytoplasm. The enzyme catalyses Endonucleolytic cleavage to 5'-phosphomonoester.. Functionally, endonuclease that specifically degrades the RNA of RNA-DNA hybrids. The sequence is that of Ribonuclease HII from Orientia tsutsugamushi (strain Ikeda) (Rickettsia tsutsugamushi).